A 377-amino-acid chain; its full sequence is MSTPSQAEVRRMVAAAGTIVVKVGSSSLTQPSGHLDPDKLDALAAALAQIRLMGGRVVLVSSGAIAAGFGPLGFDERPADVATQQATAAVGQGLLMARYETAFGRFGIRVGQILITAEDTIRATQYRNVERTLDRLLDLGVVPIINENDSLASNEIRFGDNDRLSALVANLVRAEALVLLTDVDALYTAPPSQPGSRRVEYVPNVIDALGDIQVSGSGSKVGTGGMVTKLEAARVAAVSGIPTVLTCASNAGPAMMGDPVGTVFAPVKARGSSRRLWIGFAADPRGAIVVDAGAGQAIRGGRASLLATGALEVHGDFSAGDPVWIDAESGEHLARGLAGFDSEEIPQMLGRNTAQLKRFLGPQYAHPLIHRDNLVLV.

Lysine 22 contributes to the ATP binding site. Residues serine 62, aspartate 149, and asparagine 161 each contribute to the substrate site. ATP is bound by residues 181–182 and 223–229; these read TD and TGGMVTK. The 79-residue stretch at 285-363 folds into the PUA domain; the sequence is RGAIVVDAGA…AQLKRFLGPQ (79 aa).

Belongs to the glutamate 5-kinase family.

The protein localises to the cytoplasm. It carries out the reaction L-glutamate + ATP = L-glutamyl 5-phosphate + ADP. The protein operates within amino-acid biosynthesis; L-proline biosynthesis; L-glutamate 5-semialdehyde from L-glutamate: step 1/2. Catalyzes the transfer of a phosphate group to glutamate to form L-glutamate 5-phosphate. The chain is Glutamate 5-kinase from Bifidobacterium longum subsp. infantis (strain ATCC 15697 / DSM 20088 / JCM 1222 / NCTC 11817 / S12).